The following is a 117-amino-acid chain: MARVKRGVIARARHKKVLKQAKGYYGARSRVYRVAVQAVTKAGQYAYRDRRNKKRQFRQLWIVRINAAARQNGLSYSRFINGLKKASIEIDRKILADIAVHDQNGFAALVEKAKGAL.

The protein belongs to the bacterial ribosomal protein bL20 family.

In terms of biological role, binds directly to 23S ribosomal RNA and is necessary for the in vitro assembly process of the 50S ribosomal subunit. It is not involved in the protein synthesizing functions of that subunit. The polypeptide is Large ribosomal subunit protein bL20 (Idiomarina loihiensis (strain ATCC BAA-735 / DSM 15497 / L2-TR)).